Reading from the N-terminus, the 457-residue chain is uncharacterized protein (457 aa).

2 consecutive transmembrane segments (helical) span residues 1-21 (MVSS…MTLL) and 250-270 (ILIV…ATTF).

It localises to the membrane. This is an uncharacterized protein from Saccharomyces cerevisiae (strain ATCC 204508 / S288c) (Baker's yeast).